A 207-amino-acid polypeptide reads, in one-letter code: Vascular endothelial growth factor B (207 aa).

A signal peptide spans 1-21 (MSPLLRRLLLAALLQLAPAQA). 3 disulfide bridges follow: cysteine 47–cysteine 89, cysteine 78–cysteine 122, and cysteine 82–cysteine 124. The span at 122-139 (CECRPKKKDSAVKPDRAA) shows a compositional bias: basic and acidic residues. Positions 122–207 (CECRPKKKDS…AASSVAKGGA (86 aa)) are disordered. A compositionally biased stretch (low complexity) spans 174 to 207 (PSAHAAPSTTSALTPGPAAAAADAAASSVAKGGA).

It belongs to the PDGF/VEGF growth factor family. Homodimer; disulfide-linked. Can also form heterodimer with VEGF. VEGF-B186 is O-glycosylated. In terms of tissue distribution, expressed in all tissues except liver. Highest levels found in heart, skeletal muscle and pancreas.

It localises to the secreted. Growth factor for endothelial cells. VEGF-B167 binds heparin and neuropilin-1 whereas the binding to neuropilin-1 of VEGF-B186 is regulated by proteolysis. The polypeptide is Vascular endothelial growth factor B (VEGFB) (Homo sapiens (Human)).